The primary structure comprises 350 residues: Putative D-xylulose reductase (350 aa).

Residues cysteine 43, histidine 68, and glutamate 154 each coordinate Zn(2+).

This sequence belongs to the zinc-containing alcohol dehydrogenase family. Zn(2+) is required as a cofactor.

The catalysed reaction is xylitol + NAD(+) = D-xylulose + NADH + H(+). The chain is Putative D-xylulose reductase from Agrobacterium fabrum (strain C58 / ATCC 33970) (Agrobacterium tumefaciens (strain C58)).